Consider the following 222-residue polypeptide: Phosphatidylinositol phosphate synthase (222 aa).

Residue 31-34 (DIVT) participates in a CDP-1,2-diacyl-sn-glycerol binding. The next 2 helical transmembrane spans lie at 32 to 49 (IVTL…LTLF) and 55 to 74 (WWGA…DGAM). Mg(2+) contacts are provided by D68 and D71. G72, R76, and T82 together coordinate a CDP-1,2-diacyl-sn-glycerol. The Mg(2+) site is built by D89 and D93. D93 functions as the Proton acceptor in the catalytic mechanism. 4 helical membrane-spanning segments follow: residues 95-112 (LGDG…AFGL), 118-136 (VVAT…YIKA), 156-173 (LVIV…FFPL), and 179-196 (VAMW…LQRV).

The protein belongs to the CDP-alcohol phosphatidyltransferase class-I family. In terms of assembly, homodimer. The cofactor is Mg(2+).

It is found in the cell membrane. Its subcellular location is the secreted. The protein localises to the cell wall. The enzyme catalyses a CDP-1,2-diacyl-sn-glycerol + 1D-myo-inositol 3-phosphate = a 1,2-diacyl-sn-glycero-3-phospho-(1D-myo-inositol-3-phosphate) + CMP + H(+). It catalyses the reaction 1,2-di-(9Z-octadecenoyl)-sn-glycero-3-cytidine-5'-diphosphate + 1D-myo-inositol 3-phosphate = 1,2-di-(9Z-octadecenoyl)-sn-glycero-3-phospho-(1D-myo-inositol-3-phosphate) + CMP + H(+). It carries out the reaction 1,2-dihexadecanoyl-sn-glycero-3-CDP + 1D-myo-inositol 3-phosphate = 1,2-dihexadecanoyl-sn-glycero-3-phospho-(1D-myo-inositol-3-phosphate) + CMP + H(+). It participates in phospholipid metabolism; phosphatidylinositol phosphate biosynthesis. Competitively inhibited by several inositol 1-phosphate analogs, including the phosphonate analog 1-deoxy-1-phosphonomethyl-myo-inositol (Ino-C-P). This leads to inhibition of M.smegmatis growth. Catalyzes the conjugation of the 1'-hydroxyl group of D-myo-inositol-3-phosphate (also named L-myo-inositol-1-phosphate) with a lipid tail of cytidine diphosphate diacylglycerol (CDP-DAG), forming phosphatidylinositol phosphate (PIP) and CMP. PIP is a precursor of phosphatidylinositol (PI) which is an essential lipid for mycobacteria required for formation of their cell wall. Is essential to the survival of M.smegmatis. This is Phosphatidylinositol phosphate synthase from Mycolicibacterium smegmatis (strain ATCC 700084 / mc(2)155) (Mycobacterium smegmatis).